Consider the following 307-residue polypeptide: Putative lipid kinase SE_0507 (307 aa).

Residues 3 to 139 (QPYNHGVLFY…YDVLKVNDLY (137 aa)) form the DAGKc domain. Residues S44, 74–80 (GDGTLNE), and T101 contribute to the ATP site. The Mg(2+) site is built by S220, D223, and R225. E281 functions as the Proton acceptor in the catalytic mechanism.

This sequence belongs to the diacylglycerol/lipid kinase family. Mg(2+) serves as cofactor.

May catalyze the ATP-dependent phosphorylation of lipids other than diacylglycerol (DAG). This is Putative lipid kinase SE_0507 from Staphylococcus epidermidis (strain ATCC 12228 / FDA PCI 1200).